The following is a 461-amino-acid chain: Carboxypeptidase Rv3627c (461 aa).

The first 28 residues, Met-1–Ala-28, serve as a signal peptide directing secretion. Ser-114 (acyl-ester intermediate) is an active-site residue. Lys-117 serves as the catalytic Proton acceptor. Ser-295 is an active-site residue.

The protein belongs to the peptidase S13 family.

Its function is as follows. Carboxypeptidase that cleaves terminal D-alanine from peptidoglycan in the mycobacterial cell wall. May cleave L-Lys-D-Ala and/or D-Ala-D-Ala peptide bonds. Exerts important effects on mycobacterial cell morphology and cell division. This chain is Carboxypeptidase Rv3627c, found in Mycobacterium tuberculosis (strain ATCC 25618 / H37Rv).